Here is a 523-residue protein sequence, read N- to C-terminus: GMP synthase [glutamine-hydrolyzing] (523 aa).

The 198-residue stretch at 8–205 folds into the Glutamine amidotransferase type-1 domain; the sequence is KILILDFGSQ…VVNICGCATN (198 aa). C85 acts as the Nucleophile in catalysis. Active-site residues include H179 and E181. The GMPS ATP-PPase domain maps to 206–398; sequence WTPENIIEDA…LGLPAEMLNR (193 aa). 233-239 serves as a coordination point for ATP; sequence SGGVDSS.

In terms of assembly, homodimer.

It catalyses the reaction XMP + L-glutamine + ATP + H2O = GMP + L-glutamate + AMP + diphosphate + 2 H(+). It functions in the pathway purine metabolism; GMP biosynthesis; GMP from XMP (L-Gln route): step 1/1. Functionally, catalyzes the synthesis of GMP from XMP. The polypeptide is GMP synthase [glutamine-hydrolyzing] (Actinobacillus succinogenes (strain ATCC 55618 / DSM 22257 / CCUG 43843 / 130Z)).